A 74-amino-acid chain; its full sequence is Translation initiation factor IF-1 (74 aa).

The S1-like domain occupies 1–72; sequence MSKEDAIEME…NKGRITYRLK (72 aa).

This sequence belongs to the IF-1 family. In terms of assembly, component of the 30S ribosomal translation pre-initiation complex which assembles on the 30S ribosome in the order IF-2 and IF-3, IF-1 and N-formylmethionyl-tRNA(fMet); mRNA recruitment can occur at any time during PIC assembly.

Its subcellular location is the cytoplasm. One of the essential components for the initiation of protein synthesis. Stabilizes the binding of IF-2 and IF-3 on the 30S subunit to which N-formylmethionyl-tRNA(fMet) subsequently binds. Helps modulate mRNA selection, yielding the 30S pre-initiation complex (PIC). Upon addition of the 50S ribosomal subunit IF-1, IF-2 and IF-3 are released leaving the mature 70S translation initiation complex. This Synechococcus sp. (strain JA-2-3B'a(2-13)) (Cyanobacteria bacterium Yellowstone B-Prime) protein is Translation initiation factor IF-1.